The following is a 356-amino-acid chain: Vesicular integral-membrane protein VIP36 (356 aa).

The N-terminal stretch at 1–44 is a signal peptide; it reads MAAEGWIWRWGWGRRCLGRPGLPGPGPGPATPLFLLLLLGPVVA. Topologically, residues 45–322 are lumenal; sequence DITDGNSEHL…FRSGPLTGWR (278 aa). Positions 52 to 276 constitute an L-type lectin-like domain; sequence EHLKREHSLI…DIISMKLFQL (225 aa). 2 residues coordinate a carbohydrate: Ser-96 and Asp-131. Asp-162, Tyr-164, and Asn-166 together coordinate Ca(2+). A carbohydrate is bound at residue 164–166; the sequence is YPN. Asn-183 is a glycosylation site (N-linked (GlcNAc...) asparagine). Position 190 (His-190) interacts with a carbohydrate. Asp-193 is a binding site for Ca(2+). A disulfide bridge links Cys-202 with Cys-239. An a carbohydrate-binding site is contributed by 260–262; the sequence is GDL. Residues 323–345 traverse the membrane as a helical segment; sequence VFLLLLCALLGIIVCAVVGAVVF. Topologically, residues 346–356 are cytoplasmic; it reads QKRQERNKRFY.

In terms of assembly, monomer. It depends on Ca(2+) as a cofactor. Expressed in kidney, liver, intestine, lung, spleen and heart. Low expression in brain.

It localises to the golgi apparatus membrane. In terms of biological role, plays a role as an intracellular lectin in the early secretory pathway. Interacts with N-acetyl-D-galactosamine and high-mannose type glycans and may also bind to O-linked glycans. Involved in the transport and sorting of glycoproteins carrying high mannose-type glycans. The sequence is that of Vesicular integral-membrane protein VIP36 (LMAN2) from Canis lupus familiaris (Dog).